The following is a 224-amino-acid chain: Synaptogyrin-2 (224 aa).

Met-1 is modified (N-acetylmethionine). Ser-3 carries the phosphoserine modification. One can recognise an MARVEL domain in the interval 20-171 (FLTQPQVVAR…LASLAYQRYK (152 aa)). The next 4 helical transmembrane spans lie at 26 to 46 (VVARAVCLVFALIVFSCIYGE), 73 to 93 (AIGVLAFLASAFFLVVDAYFP), 105 to 125 (VIGDLLFSALWTFLWFVGFCF), and 147 to 167 (AAITFSFFSIFSWGVLASLAY).

This sequence belongs to the synaptogyrin family. In terms of assembly, (Microbial infection) Interacts with SFTS phlebovirus protein NSs; may be involved in virus replication. Post-translationally, may be tyrosine phosphorylated by Src. In terms of tissue distribution, ubiquitous; low expression in brain.

The protein localises to the cytoplasmic vesicle membrane. Its subcellular location is the cytoplasmic vesicle. The protein resides in the secretory vesicle. It is found in the synaptic vesicle membrane. It localises to the lipid droplet. Functionally, may play a role in regulated exocytosis. In neuronal cells, modulates the localization of synaptophysin/SYP into synaptic-like microvesicles and may therefore play a role in the formation and/or the maturation of this vesicles. May also play a role in GLUT4 storage and transport to the plasma membrane. (Microbial infection) May play a role in the assembly of cytoplasmic inclusion bodies required for SFTS phlebovirus replication. The chain is Synaptogyrin-2 from Homo sapiens (Human).